The following is a 221-amino-acid chain: Phosphatidylserine decarboxylase proenzyme (221 aa).

The Schiff-base intermediate with substrate; via pyruvic acid role is filled by S189. Pyruvic acid (Ser); by autocatalysis is present on S189.

This sequence belongs to the phosphatidylserine decarboxylase family. PSD-A subfamily. In terms of assembly, heterodimer of a large membrane-associated beta subunit and a small pyruvoyl-containing alpha subunit. Requires pyruvate as cofactor. In terms of processing, is synthesized initially as an inactive proenzyme. Formation of the active enzyme involves a self-maturation process in which the active site pyruvoyl group is generated from an internal serine residue via an autocatalytic post-translational modification. Two non-identical subunits are generated from the proenzyme in this reaction, and the pyruvate is formed at the N-terminus of the alpha chain, which is derived from the carboxyl end of the proenzyme. The post-translation cleavage follows an unusual pathway, termed non-hydrolytic serinolysis, in which the side chain hydroxyl group of the serine supplies its oxygen atom to form the C-terminus of the beta chain, while the remainder of the serine residue undergoes an oxidative deamination to produce ammonia and the pyruvoyl prosthetic group on the alpha chain.

The protein localises to the cell membrane. The enzyme catalyses a 1,2-diacyl-sn-glycero-3-phospho-L-serine + H(+) = a 1,2-diacyl-sn-glycero-3-phosphoethanolamine + CO2. It functions in the pathway phospholipid metabolism; phosphatidylethanolamine biosynthesis; phosphatidylethanolamine from CDP-diacylglycerol: step 2/2. Its function is as follows. Catalyzes the formation of phosphatidylethanolamine (PtdEtn) from phosphatidylserine (PtdSer). In Porphyromonas gingivalis (strain ATCC 33277 / DSM 20709 / CIP 103683 / JCM 12257 / NCTC 11834 / 2561), this protein is Phosphatidylserine decarboxylase proenzyme.